The chain runs to 1588 residues: Multicopy suppressor of chk1 protein 1 (1588 aa).

Residues 38 to 60 are disordered; that stretch reads HAKPSTQQQQQQQNISNETTSTG. Residues 51–60 are compositionally biased toward polar residues; that stretch reads NISNETTSTG. A JmjN domain is found at 82–124; the sequence is NVRVTPKKEEFSRGLDFISDLYDQTARKSGAVRVIPPDNWKCP. The segment at 298 to 345 adopts a PHD-type 1 zinc-finger fold; that stretch reads KCKLCAQEGSSLVTCCICQSNYHYACVEAPFAPFSDIHYWTCNSCIPS. The segment covering 385–395 has biased composition (polar residues); the sequence is PLTLPSNTKTP. The disordered stretch occupies residues 385–412; the sequence is PLTLPSNTKTPPASARQSSRRTRSTSGK. In terms of domain architecture, JmjC spans 475 to 645; the sequence is FPTSRQNAYY…DMHAENSFNM (171 aa). Residues 848-872 form a disordered region; it reads EKRKPKRGSATHSHLESPSEEVEDL. The PHD-type 2 zinc finger occupies 1171–1220; that stretch reads FHYCFCRQPEAGMMIECELCHEWYHAKCMKMSKKKLRADEKFICPICDYR. The interval 1319–1341 is disordered; the sequence is APQPPPFIGESRSNRKPRPTKRQ. The segment at 1454–1505 adopts a PHD-type 3 zinc-finger fold; it reads SVICLCRQPFAISDGTVQCHNCLEWFHYECVGLSSDIVSTLSNYACPDCCSK.

It localises to the nucleus. Its function is as follows. Has a role in regulating chromatin structure via global deacetylation of histone H3. This function is associated with the activity of a histone deacetylase. This Schizosaccharomyces pombe (strain 972 / ATCC 24843) (Fission yeast) protein is Multicopy suppressor of chk1 protein 1 (msc1).